A 379-amino-acid chain; its full sequence is Trans-prenyltransferase abpB (379 aa).

Residues 90–91 (RL), R112, K197, R264, K266, Y268, and Y338 contribute to the substrate site.

It belongs to the tryptophan dimethylallyltransferase family.

The enzyme catalyses aspulvinone E + 2 dimethylallyl diphosphate = aspulvinone H + 2 diphosphate. It catalyses the reaction butyrolactone II + dimethylallyl diphosphate = butyrolactone I + diphosphate. Its pathway is secondary metabolite biosynthesis. Its function is as follows. Trans-prenyltransferase that acts in both the aspulvinones and butyrolactones pathways. Prenylates aspulvinone E and butyrolactone II to yield repectively aspulvinone H and butyrolactone I. The chain is Trans-prenyltransferase abpB from Aspergillus terreus (strain NIH 2624 / FGSC A1156).